Here is an 86-residue protein sequence, read N- to C-terminus: Small ribosomal subunit protein bS18 (86 aa).

Belongs to the bacterial ribosomal protein bS18 family. As to quaternary structure, part of the 30S ribosomal subunit. Forms a tight heterodimer with protein bS6.

Functionally, binds as a heterodimer with protein bS6 to the central domain of the 16S rRNA, where it helps stabilize the platform of the 30S subunit. This Campylobacter jejuni subsp. jejuni serotype O:6 (strain 81116 / NCTC 11828) protein is Small ribosomal subunit protein bS18.